Here is a 99-residue protein sequence, read N- to C-terminus: Bacterial microcompartment protein homohexamer (99 aa).

Residues 4-88 enclose the BMC domain; it reads ALGMIEVRGF…PHVNVDAALP (85 aa).

Belongs to the bacterial microcompartments protein family. As to quaternary structure, homohexamer with a small central pore. When purified protein is examined by atomic force microscopy it dynamically makes uniform patches about 35 Angstroms thick with hexamers in the same orientation. In the BMC the concave side faces outward, with the N- and C-terminii exposed to the cytoplasm.

The protein localises to the bacterial microcompartment. The only hexameric shell protein in this bacterium, it forms the majority of the bacterial microcompartment (BMC) shell. Expression of 5 proteins in E.coli (BMC-H (Hoch_5815), BMC-P (Hoch_5814), and 3 BMC-T (Hoch_5812, Hoch_5816, Hoch_3341)) forms a 40 nm artificial BMC with a molecular mass of 6.5 MDa. There are 60 BMC-H hexamers per BMC. The shell facets are 20-30 Angstroms thick (a single hexamer layer), with 1 of BMC-T trimers protruding to the exterior. The protein is Bacterial microcompartment protein homohexamer of Haliangium ochraceum (strain DSM 14365 / JCM 11303 / SMP-2).